The following is a 290-amino-acid chain: Acetylglutamate kinase (290 aa).

Substrate contacts are provided by residues 60–61, Arg82, and Asn187; that span reads GG.

Belongs to the acetylglutamate kinase family. ArgB subfamily.

The protein localises to the cytoplasm. The enzyme catalyses N-acetyl-L-glutamate + ATP = N-acetyl-L-glutamyl 5-phosphate + ADP. Its pathway is amino-acid biosynthesis; L-arginine biosynthesis; N(2)-acetyl-L-ornithine from L-glutamate: step 2/4. In terms of biological role, catalyzes the ATP-dependent phosphorylation of N-acetyl-L-glutamate. The chain is Acetylglutamate kinase from Marinobacter nauticus (strain ATCC 700491 / DSM 11845 / VT8) (Marinobacter aquaeolei).